The following is a 182-amino-acid chain: Small ribosomal subunit protein uS5 (182 aa).

Residues 16-79 enclose the S5 DRBM domain; it reads FVDRLVHINR…ESAKRGMIYV (64 aa).

This sequence belongs to the universal ribosomal protein uS5 family. Part of the 30S ribosomal subunit. Contacts proteins S4 and S8.

Functionally, with S4 and S12 plays an important role in translational accuracy. Located at the back of the 30S subunit body where it stabilizes the conformation of the head with respect to the body. The protein is Small ribosomal subunit protein uS5 of Bartonella henselae (strain ATCC 49882 / DSM 28221 / CCUG 30454 / Houston 1) (Rochalimaea henselae).